The following is a 184-amino-acid chain: Adenine phosphoribosyltransferase (184 aa).

The protein belongs to the purine/pyrimidine phosphoribosyltransferase family. Homodimer.

The protein resides in the cytoplasm. The catalysed reaction is AMP + diphosphate = 5-phospho-alpha-D-ribose 1-diphosphate + adenine. It functions in the pathway purine metabolism; AMP biosynthesis via salvage pathway; AMP from adenine: step 1/1. Catalyzes a salvage reaction resulting in the formation of AMP, that is energically less costly than de novo synthesis. In Paracidovorax citrulli (strain AAC00-1) (Acidovorax citrulli), this protein is Adenine phosphoribosyltransferase.